The chain runs to 372 residues: Ciliary neurotrophic factor receptor subunit alpha (372 aa).

The N-terminal stretch at 1-22 (MAASVPWACCAVLAAAAAAVYT) is a signal peptide. One can recognise an Ig-like C2-type domain in the interval 27–104 (PQEAPHVQYE…WHLRHQVLLH (78 aa)). Residues C46 and C89 are joined by a disulfide bond. N60, N70, N142, and N190 each carry an N-linked (GlcNAc...) asparagine glycan. 2 Fibronectin type-III domains span residues 108 to 205 (PPRE…VKPD) and 206 to 306 (PPEN…TEEP). Residues 290 to 294 (WSDWS) carry the WSXWS motif motif. A disordered region spans residues 301 to 338 (PWTEEPRHLTTEAQAPETTTSTTSSLAPPPTTKICDPG). Residues 311 to 326 (TEAQAPETTTSTTSSL) are compositionally biased toward low complexity. S342 carries the GPI-anchor amidated serine lipid modification. A propeptide spans 343-372 (GGGPSILFLTSVPVTLVLAAAAATANNLLI) (removed in mature form).

The protein belongs to the type I cytokine receptor family. Type 3 subfamily. In terms of assembly, forms a heterotrimer with LIFR and IL6ST. Interacts with heterodimeric neurotropic cytokine composed of CLCF1/CLC and CRLF1/CLF-1. Either alone or in complex with the heterodimer CLCF1-CRLF1 interacts with SORL1; this interaction may promote internalization and lysosomal degradation.

Its subcellular location is the cell membrane. Binds to CNTF. The alpha subunit provides the receptor specificity. The polypeptide is Ciliary neurotrophic factor receptor subunit alpha (Cntfr) (Mus musculus (Mouse)).